Reading from the N-terminus, the 209-residue chain is Potassium-transporting ATPase KdpC subunit (209 aa).

Residues 18–38 (MLAVFTLFGLGLAYSLVATGI) form a helical membrane-spanning segment.

This sequence belongs to the KdpC family. In terms of assembly, the system is composed of three essential subunits: KdpA, KdpB and KdpC.

It is found in the cell inner membrane. Part of the high-affinity ATP-driven potassium transport (or Kdp) system, which catalyzes the hydrolysis of ATP coupled with the electrogenic transport of potassium into the cytoplasm. This subunit acts as a catalytic chaperone that increases the ATP-binding affinity of the ATP-hydrolyzing subunit KdpB by the formation of a transient KdpB/KdpC/ATP ternary complex. This Xanthomonas oryzae pv. oryzae (strain MAFF 311018) protein is Potassium-transporting ATPase KdpC subunit.